A 239-amino-acid polypeptide reads, in one-letter code: 1-(5-phosphoribosyl)-5-[(5-phosphoribosylamino)methylideneamino] imidazole-4-carboxamide isomerase (239 aa).

The active-site Proton acceptor is D9. The active-site Proton donor is D131.

Belongs to the HisA/HisF family.

The protein resides in the cytoplasm. The enzyme catalyses 1-(5-phospho-beta-D-ribosyl)-5-[(5-phospho-beta-D-ribosylamino)methylideneamino]imidazole-4-carboxamide = 5-[(5-phospho-1-deoxy-D-ribulos-1-ylimino)methylamino]-1-(5-phospho-beta-D-ribosyl)imidazole-4-carboxamide. It participates in amino-acid biosynthesis; L-histidine biosynthesis; L-histidine from 5-phospho-alpha-D-ribose 1-diphosphate: step 4/9. This is 1-(5-phosphoribosyl)-5-[(5-phosphoribosylamino)methylideneamino] imidazole-4-carboxamide isomerase from Bacteroides thetaiotaomicron (strain ATCC 29148 / DSM 2079 / JCM 5827 / CCUG 10774 / NCTC 10582 / VPI-5482 / E50).